Consider the following 189-residue polypeptide: Peptidyl-tRNA hydrolase (189 aa).

Residue Y15 participates in tRNA binding. Catalysis depends on H20, which acts as the Proton acceptor. The tRNA site is built by F66, N68, and N114.

It belongs to the PTH family. As to quaternary structure, monomer.

It is found in the cytoplasm. The enzyme catalyses an N-acyl-L-alpha-aminoacyl-tRNA + H2O = an N-acyl-L-amino acid + a tRNA + H(+). Its function is as follows. Hydrolyzes ribosome-free peptidyl-tRNAs (with 1 or more amino acids incorporated), which drop off the ribosome during protein synthesis, or as a result of ribosome stalling. In terms of biological role, catalyzes the release of premature peptidyl moieties from peptidyl-tRNA molecules trapped in stalled 50S ribosomal subunits, and thus maintains levels of free tRNAs and 50S ribosomes. This Streptococcus pneumoniae (strain CGSP14) protein is Peptidyl-tRNA hydrolase.